The following is a 171-amino-acid chain: Large ribosomal subunit protein uL10 (171 aa).

It belongs to the universal ribosomal protein uL10 family. As to quaternary structure, part of the ribosomal stalk of the 50S ribosomal subunit. The N-terminus interacts with L11 and the large rRNA to form the base of the stalk. The C-terminus forms an elongated spine to which L12 dimers bind in a sequential fashion forming a multimeric L10(L12)X complex.

Its function is as follows. Forms part of the ribosomal stalk, playing a central role in the interaction of the ribosome with GTP-bound translation factors. This Paramagnetospirillum magneticum (strain ATCC 700264 / AMB-1) (Magnetospirillum magneticum) protein is Large ribosomal subunit protein uL10.